We begin with the raw amino-acid sequence, 316 residues long: Glutathione synthetase (316 aa).

The region spanning 124–311 (NEKLAALLFP…IAGLLFDAIE (188 aa)) is the ATP-grasp domain. 151–208 (FVLAHGQAVLKPLDGMGGRSIFRSGTGDPNLNVILETLTDGGRKLTLAQRFIPDITAG) provides a ligand contact to ATP. Residues glutamate 282 and asparagine 284 each contribute to the Mg(2+) site.

This sequence belongs to the prokaryotic GSH synthase family. Requires Mg(2+) as cofactor. Mn(2+) serves as cofactor.

The enzyme catalyses gamma-L-glutamyl-L-cysteine + glycine + ATP = glutathione + ADP + phosphate + H(+). Its pathway is sulfur metabolism; glutathione biosynthesis; glutathione from L-cysteine and L-glutamate: step 2/2. This Xanthomonas campestris pv. campestris (strain ATCC 33913 / DSM 3586 / NCPPB 528 / LMG 568 / P 25) protein is Glutathione synthetase.